The following is a 101-amino-acid chain: Large ribosomal subunit protein bL28 (101 aa).

This sequence belongs to the bacterial ribosomal protein bL28 family.

This chain is Large ribosomal subunit protein bL28, found in Rhodopseudomonas palustris (strain ATCC BAA-98 / CGA009).